Consider the following 297-residue polypeptide: Phosphatidylinositol N-acetylglucosaminyltransferase subunit C (297 aa).

The next 4 membrane-spanning stretches (helical) occupy residues 67 to 87, 88 to 108, 153 to 173, and 239 to 259; these read VFVV…WLFG, TGLA…GGDG, AVFM…AAIV, and AFGG…LLLF.

Belongs to the PIGC family. In terms of assembly, component of the glycosylphosphatidylinositol-N-acetylglucosaminyltransferase (GPI-GnT) complex composed at least by PIGA, PIGC, PIGH, PIGP, PIGQ, PIGY and DPM2. Interacts with PIGQ. Interacts with the heterodimer PIGA:PIGH.

The protein localises to the endoplasmic reticulum membrane. It functions in the pathway glycolipid biosynthesis; glycosylphosphatidylinositol-anchor biosynthesis. Its function is as follows. Part of the glycosylphosphatidylinositol-N-acetylglucosaminyltransferase (GPI-GnT) complex that catalyzes the transfer of N-acetylglucosamine from UDP-N-acetylglucosamine to phosphatidylinositol and participates in the first step of GPI biosynthesis. The sequence is that of Phosphatidylinositol N-acetylglucosaminyltransferase subunit C from Mus musculus (Mouse).